A 788-amino-acid chain; its full sequence is Protein translocase subunit SecA 2 (788 aa).

Residues Gln86, 104–108 (GEGKT), and Asp493 contribute to the ATP site.

Belongs to the SecA family. As to quaternary structure, monomer and homodimer. Part of the essential Sec protein translocation apparatus which comprises SecA, SecYEG and auxiliary proteins SecDF. Other proteins may also be involved.

The protein resides in the cell membrane. Its subcellular location is the cytoplasm. The enzyme catalyses ATP + H2O + cellular proteinSide 1 = ADP + phosphate + cellular proteinSide 2.. Functionally, part of the Sec protein translocase complex. Interacts with the SecYEG preprotein conducting channel. Has a central role in coupling the hydrolysis of ATP to the transfer of proteins into and across the cell membrane, serving as an ATP-driven molecular motor driving the stepwise translocation of polypeptide chains across the membrane. The chain is Protein translocase subunit SecA 2 from Bacillus thuringiensis (strain Al Hakam).